Consider the following 309-residue polypeptide: Ornithine carbamoyltransferase (309 aa).

Residues S51 to T54, Q78, R102, and H129 to Q132 each bind carbamoyl phosphate. L-ornithine is bound by residues N159, D223, and S227 to M228. Carbamoyl phosphate contacts are provided by residues C263–L264 and R291.

Belongs to the aspartate/ornithine carbamoyltransferase superfamily. OTCase family.

The protein resides in the cytoplasm. The enzyme catalyses carbamoyl phosphate + L-ornithine = L-citrulline + phosphate + H(+). It participates in amino-acid biosynthesis; L-arginine biosynthesis; L-arginine from L-ornithine and carbamoyl phosphate: step 1/3. Its function is as follows. Reversibly catalyzes the transfer of the carbamoyl group from carbamoyl phosphate (CP) to the N(epsilon) atom of ornithine (ORN) to produce L-citrulline. In Nitratiruptor sp. (strain SB155-2), this protein is Ornithine carbamoyltransferase.